The following is a 240-amino-acid chain: (DL)-glycerol-3-phosphatase 2 (240 aa).

The active-site Nucleophile is the Asp20. The Mg(2+) site is built by Asp20, Asp22, and Asp185. Asp22 (proton donor) is an active-site residue.

Belongs to the HAD-like hydrolase superfamily. DOG/GPP family. Requires Mg(2+) as cofactor. As to expression, ubiquitous with highest expression in siliques. Mainly restricted to the meristem of immature flower and vascular elements of the root, shoot, leave, siliqua and developing embryo (at the protein level).

It localises to the cytoplasm. It catalyses the reaction sn-glycerol 1-phosphate + H2O = glycerol + phosphate. The catalysed reaction is sn-glycerol 3-phosphate + H2O = glycerol + phosphate. In terms of biological role, acts as a glycerol-3-phosphatase with higher stereospecificity for L-glycerol-3-phosphate than DL-glycerol-3-phosphate. This Arabidopsis thaliana (Mouse-ear cress) protein is (DL)-glycerol-3-phosphatase 2 (GPP2).